Reading from the N-terminus, the 387-residue chain is GDSL esterase/lipase At2g23540 (387 aa).

A signal peptide spans 1–32 (MATRASTSSRVSPAFTFLVIFFLLSLTASVEA). The active-site Nucleophile is S55. N-linked (GlcNAc...) asparagine glycans are attached at residues N139 and N159. Active-site residues include D352 and H355. Residue N380 is glycosylated (N-linked (GlcNAc...) asparagine).

It belongs to the 'GDSL' lipolytic enzyme family.

It localises to the secreted. This is GDSL esterase/lipase At2g23540 from Arabidopsis thaliana (Mouse-ear cress).